A 301-amino-acid polypeptide reads, in one-letter code: Triplex capsid protein 2 (301 aa).

This sequence belongs to the herpesviridae TRX2 protein family. As to quaternary structure, interacts with TRX1 and major capisd protein/MCP.

Its subcellular location is the virion. The protein resides in the host nucleus. Structural component of the T=16 icosahedral capsid. The capsid is composed of pentamers and hexamers of major capsid protein/MCP, which are linked together by heterotrimers called triplexes. These triplexes are formed by a single molecule of triplex protein 1/TRX1 and two copies of triplex protein 2/TRX2. Additionally, TRX1 is required for efficient transport of TRX2 to the nucleus, which is the site of capsid assembly. The sequence is that of Triplex capsid protein 2 from Homo sapiens (Human).